The sequence spans 117 residues: Glycine cleavage system H-like protein (117 aa).

One can recognise a Lipoyl-binding domain in the interval 21 to 103; sequence IVKLGLSSQM…ESEGWFVVLQ (83 aa). The residue at position 62 (Lys-62) is an N6-lipoyllysine.

The protein belongs to the GcvH family. It depends on (R)-lipoate as a cofactor.

This Chlamydia trachomatis serovar L2 (strain ATCC VR-902B / DSM 19102 / 434/Bu) protein is Glycine cleavage system H-like protein.